The primary structure comprises 334 residues: Holliday junction branch migration complex subunit RuvB (334 aa).

Residues 4 to 184 are large ATPase domain (RuvB-L); the sequence is ADRLIQPQIQ…FGIPLRLEFY (181 aa). Residues Arg24, Gly65, Lys68, Thr69, Thr70, 131-133, Arg174, Tyr184, and Arg221 contribute to the ATP site; that span reads EDY. Mg(2+) is bound at residue Thr69. A small ATPAse domain (RuvB-S) region spans residues 185-255; sequence NIKDLSTIVT…VAEHALDLLD (71 aa). Residues 258 to 334 are head domain (RuvB-H); that stretch reads SEGFDYMDRK…YQHFELIKPE (77 aa). 3 residues coordinate DNA: Arg294, Arg313, and Arg318.

The protein belongs to the RuvB family. As to quaternary structure, homohexamer. Forms an RuvA(8)-RuvB(12)-Holliday junction (HJ) complex. HJ DNA is sandwiched between 2 RuvA tetramers; dsDNA enters through RuvA and exits via RuvB. An RuvB hexamer assembles on each DNA strand where it exits the tetramer. Each RuvB hexamer is contacted by two RuvA subunits (via domain III) on 2 adjacent RuvB subunits; this complex drives branch migration. In the full resolvosome a probable DNA-RuvA(4)-RuvB(12)-RuvC(2) complex forms which resolves the HJ.

It localises to the cytoplasm. The catalysed reaction is ATP + H2O = ADP + phosphate + H(+). In terms of biological role, the RuvA-RuvB-RuvC complex processes Holliday junction (HJ) DNA during genetic recombination and DNA repair, while the RuvA-RuvB complex plays an important role in the rescue of blocked DNA replication forks via replication fork reversal (RFR). RuvA specifically binds to HJ cruciform DNA, conferring on it an open structure. The RuvB hexamer acts as an ATP-dependent pump, pulling dsDNA into and through the RuvAB complex. RuvB forms 2 homohexamers on either side of HJ DNA bound by 1 or 2 RuvA tetramers; 4 subunits per hexamer contact DNA at a time. Coordinated motions by a converter formed by DNA-disengaged RuvB subunits stimulates ATP hydrolysis and nucleotide exchange. Immobilization of the converter enables RuvB to convert the ATP-contained energy into a lever motion, pulling 2 nucleotides of DNA out of the RuvA tetramer per ATP hydrolyzed, thus driving DNA branch migration. The RuvB motors rotate together with the DNA substrate, which together with the progressing nucleotide cycle form the mechanistic basis for DNA recombination by continuous HJ branch migration. Branch migration allows RuvC to scan DNA until it finds its consensus sequence, where it cleaves and resolves cruciform DNA. This is Holliday junction branch migration complex subunit RuvB from Shewanella baltica (strain OS223).